Consider the following 287-residue polypeptide: Inositol-1-monophosphatase (287 aa).

The Mg(2+) site is built by Glu79, Asp96, Leu98, and Asp99. A substrate-binding site is contributed by Glu79. Residues 98–101 (LDGT), Arg195, and Asp224 each bind substrate. Asp224 provides a ligand contact to Mg(2+).

It belongs to the inositol monophosphatase superfamily. Requires Mg(2+) as cofactor.

The catalysed reaction is a myo-inositol phosphate + H2O = myo-inositol + phosphate. The chain is Inositol-1-monophosphatase (suhB) from Synechocystis sp. (strain ATCC 27184 / PCC 6803 / Kazusa).